The chain runs to 260 residues: Pyridoxine 5'-phosphate synthase (260 aa).

Asn7 and Arg18 together coordinate 3-amino-2-oxopropyl phosphate. His43 functions as the Proton acceptor in the catalytic mechanism. Residues Arg45 and His50 each coordinate 1-deoxy-D-xylulose 5-phosphate. Glu83 serves as the catalytic Proton acceptor. Thr113 contacts 1-deoxy-D-xylulose 5-phosphate. The active-site Proton donor is His208. 3-amino-2-oxopropyl phosphate contacts are provided by residues Asp209 and 230–231; that span reads GH.

It belongs to the PNP synthase family. In terms of assembly, homooctamer; tetramer of dimers.

The protein resides in the cytoplasm. The catalysed reaction is 3-amino-2-oxopropyl phosphate + 1-deoxy-D-xylulose 5-phosphate = pyridoxine 5'-phosphate + phosphate + 2 H2O + H(+). The protein operates within cofactor biosynthesis; pyridoxine 5'-phosphate biosynthesis; pyridoxine 5'-phosphate from D-erythrose 4-phosphate: step 5/5. Functionally, catalyzes the complicated ring closure reaction between the two acyclic compounds 1-deoxy-D-xylulose-5-phosphate (DXP) and 3-amino-2-oxopropyl phosphate (1-amino-acetone-3-phosphate or AAP) to form pyridoxine 5'-phosphate (PNP) and inorganic phosphate. This Leptospira biflexa serovar Patoc (strain Patoc 1 / Ames) protein is Pyridoxine 5'-phosphate synthase.